The chain runs to 86 residues: Parvalbumin beta 3 (86 aa).

Alanine 1 is modified (N-acetylalanine). The region spanning 35–70 is the EF-hand domain; sequence LSPEEVKKFFAIIDQDHSGFIEEEELKLFLQTFSAG. Aspartate 48, aspartate 50, serine 52, phenylalanine 54, glutamate 56, and glutamate 59 together coordinate Ca(2+).

It belongs to the parvalbumin family.

In muscle, parvalbumin is thought to be involved in relaxation after contraction. It binds two calcium ions. The sequence is that of Parvalbumin beta 3 from Merluccius hubbsi (Argentine hake).